The following is a 236-amino-acid chain: Methylosome subunit pICln (236 aa).

Ser2 is subject to N-acetylserine. A phosphoserine mark is found at Ser95, Ser143, Ser192, Ser194, Ser197, and Ser209. The tract at residues 134–158 (LHPDPEDEDSDDYDGEEYDVEAHEQ) is disordered. Positions 138–152 (PEDEDSDDYDGEEYD) are enriched in acidic residues. Residue Thr222 is modified to Phosphothreonine.

This sequence belongs to the pICln (TC 1.A.47) family. Component of the methylosome, a 20S complex containing at least PRMT5/SKB1, WDR77/MEP50 and CLNS1A/pICln. May mediate SNRPD1 and SNRPD3 methylation. Forms a 6S pICln-Sm complex composed of CLNS1A/pICln, SNRPD1, SNRPD2, SNRPE, SNRPF and SNRPG; ring-like structure where CLNS1A/pICln mimics additional Sm proteins and which is unable to assemble into the core snRNP. Interacts with LSM10 and LSM11. Expressed in most tissues.

The protein localises to the cytoplasm. Its subcellular location is the cytosol. It localises to the nucleus. It is found in the cytoskeleton. In terms of biological role, involved in both the assembly of spliceosomal snRNPs and the methylation of Sm proteins. Chaperone that regulates the assembly of spliceosomal U1, U2, U4 and U5 small nuclear ribonucleoproteins (snRNPs), the building blocks of the spliceosome, and thereby plays an important role in the splicing of cellular pre-mRNAs. Most spliceosomal snRNPs contain a common set of Sm proteins SNRPB, SNRPD1, SNRPD2, SNRPD3, SNRPE, SNRPF and SNRPG that assemble in a heptameric protein ring on the Sm site of the small nuclear RNA to form the core snRNP (Sm core). In the cytosol, the Sm proteins SNRPD1, SNRPD2, SNRPE, SNRPF and SNRPG are trapped in an inactive 6S pICln-Sm complex by the chaperone CLNS1A that controls the assembly of the core snRNP. Dissociation by the SMN complex of CLNS1A from the trapped Sm proteins and their transfer to an SMN-Sm complex triggers the assembly of core snRNPs and their transport to the nucleus. The sequence is that of Methylosome subunit pICln (Clns1a) from Rattus norvegicus (Rat).